Reading from the N-terminus, the 227-residue chain is Ribosomal RNA large subunit methyltransferase E (227 aa).

Residues glycine 78, tryptophan 80, aspartate 103, aspartate 119, and aspartate 143 each coordinate S-adenosyl-L-methionine. The Proton acceptor role is filled by lysine 183.

The protein belongs to the class I-like SAM-binding methyltransferase superfamily. RNA methyltransferase RlmE family.

It is found in the cytoplasm. The enzyme catalyses uridine(2552) in 23S rRNA + S-adenosyl-L-methionine = 2'-O-methyluridine(2552) in 23S rRNA + S-adenosyl-L-homocysteine + H(+). Its function is as follows. Specifically methylates the uridine in position 2552 of 23S rRNA at the 2'-O position of the ribose in the fully assembled 50S ribosomal subunit. The chain is Ribosomal RNA large subunit methyltransferase E from Rickettsia peacockii (strain Rustic).